Consider the following 423-residue polypeptide: Gamma-glutamyl phosphate reductase (423 aa).

This sequence belongs to the gamma-glutamyl phosphate reductase family.

It is found in the cytoplasm. The enzyme catalyses L-glutamate 5-semialdehyde + phosphate + NADP(+) = L-glutamyl 5-phosphate + NADPH + H(+). Its pathway is amino-acid biosynthesis; L-proline biosynthesis; L-glutamate 5-semialdehyde from L-glutamate: step 2/2. Its function is as follows. Catalyzes the NADPH-dependent reduction of L-glutamate 5-phosphate into L-glutamate 5-semialdehyde and phosphate. The product spontaneously undergoes cyclization to form 1-pyrroline-5-carboxylate. This Pseudomonas putida (strain ATCC 47054 / DSM 6125 / CFBP 8728 / NCIMB 11950 / KT2440) protein is Gamma-glutamyl phosphate reductase.